Reading from the N-terminus, the 187-residue chain is MKISGVDIRPGNIIEYEGGIWKVAKIQHTQPGKGGAYMQVEMKNLQDGRKTNVRFRSADTVEKVRLDTQDYQFLYEDGDQLVFMDQDTYEQINLDSDLLGDARPFLQDGMTVQLELWEEKPISVQLPQQVEADIVEADAVVKGQTASSSYKPAVLDNGVRIMVPPHIESGTRIVVDVYEQTYVGKAG.

Belongs to the elongation factor P family.

Its subcellular location is the cytoplasm. It functions in the pathway protein biosynthesis; polypeptide chain elongation. In terms of biological role, involved in peptide bond synthesis. Stimulates efficient translation and peptide-bond synthesis on native or reconstituted 70S ribosomes in vitro. Probably functions indirectly by altering the affinity of the ribosome for aminoacyl-tRNA, thus increasing their reactivity as acceptors for peptidyl transferase. The chain is Elongation factor P from Erythrobacter litoralis (strain HTCC2594).